The sequence spans 648 residues: Macrolide export ATP-binding/permease protein MacB (648 aa).

The ABC transporter domain maps to Leu-5–Thr-243. Gly-41 to Ser-48 provides a ligand contact to ATP. The next 4 membrane-spanning stretches (helical) occupy residues Leu-273–Gly-293, Leu-523–Ile-543, Ala-576–Phe-596, and Leu-600–Cys-620.

The protein belongs to the ABC transporter superfamily. Macrolide exporter (TC 3.A.1.122) family. Homodimer. Part of the tripartite efflux system MacAB-TolC, which is composed of an inner membrane transporter, MacB, a periplasmic membrane fusion protein, MacA, and an outer membrane component, TolC. The complex forms a large protein conduit and can translocate molecules across both the inner and outer membranes. Interacts with MacA.

The protein localises to the cell inner membrane. Its function is as follows. Part of the tripartite efflux system MacAB-TolC. MacB is a non-canonical ABC transporter that contains transmembrane domains (TMD), which form a pore in the inner membrane, and an ATP-binding domain (NBD), which is responsible for energy generation. Confers resistance against macrolides. In Shigella sonnei (strain Ss046), this protein is Macrolide export ATP-binding/permease protein MacB.